Here is a 354-residue protein sequence, read N- to C-terminus: Uroporphyrinogen decarboxylase (354 aa).

Residues 27 to 31 (RQAGR), Asp77, Tyr154, Ser209, and His327 each bind substrate.

It belongs to the uroporphyrinogen decarboxylase family. Homodimer.

It is found in the cytoplasm. The enzyme catalyses uroporphyrinogen III + 4 H(+) = coproporphyrinogen III + 4 CO2. Its pathway is porphyrin-containing compound metabolism; protoporphyrin-IX biosynthesis; coproporphyrinogen-III from 5-aminolevulinate: step 4/4. In terms of biological role, catalyzes the decarboxylation of four acetate groups of uroporphyrinogen-III to yield coproporphyrinogen-III. The sequence is that of Uroporphyrinogen decarboxylase from Shewanella amazonensis (strain ATCC BAA-1098 / SB2B).